The sequence spans 276 residues: MTRSDLAAAFDDGPALVSYVVAGDPTPAATAEYIDALVDGGTDVIELGLPFSEPVAEGTTIQNAIKRALDAGMTPDAYLDLVARIDADVPVVCMTYYNLLFQYGDRAGPAAFVSAAAEAGVSGFVVPDLPVDESGPLREACRAHGLDLVFVVAPTTTADRRERMLDLTTGFVYVQGRVGTTGAREEVSAATPDALAALQHTDIPKAVGFGVSSGEQAREITASGADGVIVGSAYVDTVADGVADDDPPSVVADRLRDLAAELKAGAARGVPEPEHK.

Residues Glu46 and Glu57 each act as proton acceptor in the active site.

It belongs to the TrpA family. Tetramer of two alpha and two beta chains.

The catalysed reaction is (1S,2R)-1-C-(indol-3-yl)glycerol 3-phosphate + L-serine = D-glyceraldehyde 3-phosphate + L-tryptophan + H2O. The protein operates within amino-acid biosynthesis; L-tryptophan biosynthesis; L-tryptophan from chorismate: step 5/5. Functionally, the alpha subunit is responsible for the aldol cleavage of indoleglycerol phosphate to indole and glyceraldehyde 3-phosphate. The chain is Tryptophan synthase alpha chain from Halobacterium salinarum (strain ATCC 29341 / DSM 671 / R1).